We begin with the raw amino-acid sequence, 273 residues long: Alcohol dehydrogenase-related 31 kDa protein (273 aa).

11–34 (YVADCGGIALETCKVLMTKNIAKL) is a binding site for NAD(+). A substrate-binding site is contributed by S139. Y152 (proton acceptor) is an active-site residue.

The protein belongs to the short-chain dehydrogenases/reductases (SDR) family.

The polypeptide is Alcohol dehydrogenase-related 31 kDa protein (Adhr) (Drosophila immigrans (Fruit fly)).